Here is a 356-residue protein sequence, read N- to C-terminus: Guanine nucleotide-binding protein alpha-2 subunit (356 aa).

Gly2 carries N-myristoyl glycine lipidation. Residue Cys4 is the site of S-palmitoyl cysteine attachment. In terms of domain architecture, G-alpha spans 32-356 (RTVKLLLLGA…QSNLHKSGLY (325 aa)). The tract at residues 35–48 (KLLLLGAGECGKST) is G1 motif. Residues Glu43, Gly45, Lys46, Ser47, Thr48, Asp153, Leu178, Thr184, Gly206, Asn272, Lys273, Asp275, and Ala328 each coordinate GTP. Ser47 lines the Mg(2+) pocket. Residues 176–184 (DTLLLRTKT) are G2 motif. Thr184 contributes to the Mg(2+) binding site. Residues 199–208 (FRVFDVGGQR) form a G3 motif region. The tract at residues 268–275 (ILFLNKKD) is G4 motif. Residues 326 to 331 (TCATDT) are G5 motif.

The protein belongs to the G-alpha family. G(q) subfamily. G proteins are composed of 3 units; alpha, beta and gamma. The alpha chain contains the guanine nucleotide binding site. Mg(2+) serves as cofactor.

In terms of biological role, guanine nucleotide-binding proteins (G proteins) are involved as modulators or transducers in various transmembrane signaling systems. Involved in behavioral responses to P.aeruginosa by controlling the expression of daf-7, a member of the TGF-beta family, in ASJ sensory neurons. This Caenorhabditis elegans protein is Guanine nucleotide-binding protein alpha-2 subunit (gpa-2).